A 198-amino-acid chain; its full sequence is Twist-related protein 1 (198 aa).

The span at 1 to 18 (MMQDVSSSPVSPADDSLS) shows a compositional bias: low complexity. The tract at residues 1–101 (MMQDVSSSPV…GGGSPQSYEE (101 aa)) is disordered. Over residues 34–43 (RGGRKRRSSR) the composition is skewed to basic residues. Gly residues-rich tracts occupy residues 46–64 (AGGG…GGDE) and 79–95 (GCGG…GGGS). The bHLH domain maps to 104 to 155 (TQRVMANVRERQRTQSLNEAFAALRKIIPTLPSDKLSKIQTLKLAARYIDFL). Residues 157–187 (QVLQSDELDSKMASCSYVAHERLSYAFSVWR) form a sufficient for transactivation activity region.

Efficient DNA binding requires dimerization with another bHLH protein. Homodimer or heterodimer with E proteins such as TCF3. ID1 binds preferentially to TCF3 but does not interact efficiently with TWIST1 so ID1 levels control the amount of TCF3 available to dimerize with TWIST and thus determine the type of dimer formed.

Its subcellular location is the nucleus. Its function is as follows. Acts as a transcriptional regulator. Inhibits myogenesis by sequestrating E proteins, inhibiting trans-activation by MEF2, and inhibiting DNA-binding by MYOD1 through physical interaction. This interaction probably involves the basic domains of both proteins. Also represses expression of pro-inflammatory cytokines such as TNFA and IL1B. Regulates cranial suture patterning and fusion. Activates transcription as a heterodimer with E proteins. Regulates gene expression differentially, depending on dimer composition. Homodimers induce expression of FGFR2 and POSTN while heterodimers repress FGFR2 and POSTN expression and induce THBS1 expression. Heterodimerization is also required for osteoblast differentiation. Represses the activity of the circadian transcriptional activator: NPAS2-BMAL1 heterodimer. This Eulemur fulvus fulvus (Brown lemur) protein is Twist-related protein 1 (TWIST1).